Consider the following 3508-residue polypeptide: WD repeat and FYVE domain-containing protein 3 (3508 aa).

Residues Ser1942 and Ser2277 each carry the phosphoserine modification. Disordered stretches follow at residues 2279–2303 and 2441–2504; these read FGLS…SPSP and SSEG…EKTD. A sufficient for translocalization to p62 bodies/ALIS region spans residues 2284 to 2963; sequence LTGSRRNRKE…PHPPKRVRSR (680 aa). A compositionally biased stretch (basic and acidic residues) spans 2450–2459; sequence EPEHGEDTIA. Position 2474 is a phosphoserine (Ser2474). A BEACH-type PH domain is found at 2513–2638; the sequence is EEGEKIQHMY…IRNKVYQRFL (126 aa). The segment at 2568-3508 is interaction with SQSTM1; the sequence is MHEPIIPRGA…RGAEDGPRNC (941 aa). The 294-residue stretch at 2665–2958 folds into the BEACH domain; that stretch reads GLLSTLVGEK…QLFKKPHPPK (294 aa). Positions 2963-3508 are interaction with ATG5; the sequence is RLNGDNIGIS…RGAEDGPRNC (546 aa). 4 WD repeats span residues 3059-3097, 3107-3146, 3149-3188, and 3192-3236; these read SEWG…EKAK, GHTD…FLTQ, GHRA…VSVN, and GRSQ…VPET. The interval 3254–3317 is disordered; sequence AQIGQQAQDD…SGSDDSRRWS (64 aa). Residues 3261 to 3272 show a composition bias toward acidic residues; the sequence is QDDDSSDSETEE. Ser3317 and Ser3321 each carry phosphoserine. Positions 3326–3331 match the LIR motif; sequence DGFIFV. The WD 5 repeat unit spans residues 3390–3429; it reads THPAEVTALGVSKDHSRILVGDSRGRVFSWSVSDQPGRSA. Residues 3436 to 3496 form an FYVE-type zinc finger; the sequence is DEGGDSCSGC…VCQNCYYSLQ (61 aa). Positions 3442, 3445, 3458, 3461, 3466, 3469, 3488, and 3491 each coordinate Zn(2+).

Directly interacts with ATG5 and associates with the ATG12-ATG5-ATG16L complex. Interacts with p62/SQSTM1. Directly interacts with GABARAP, GABARAPL1 and GABARAPL2; the interaction with GABARAP is required for WDFY3 recruitment to MAP1LC3B-positive p62/SQSTM1 bodies. Weakly interacts with MAP1LC3C; this interaction is direct. Does not interact with MAP1LC3A, nor MAP1LC3B. Interacts with TRAF6. In terms of tissue distribution, widely expressed, with high levels in the brain (at protein level). In the brain, expressed by both neuronal and non-neuronal cells. Expressed in bones, in the periosteum, cartilage, growth plate, trabeculae of the primary spongiosa, and scattered hematopoietic cells within the medullary cavity. Tends to be expressed at lower levels in the hypertrophic zone compared to trabeculae. Expressed in osteoblasts, osteoclasts and bone-marrow derived macrophages.

It localises to the nucleus. Its subcellular location is the cytoplasm. The protein localises to the cytosol. It is found in the PML body. The protein resides in the membrane. It localises to the perikaryon. Its subcellular location is the cell projection. The protein localises to the axon. In terms of biological role, required for selective macroautophagy (aggrephagy). Acts as an adapter protein by linking specific proteins destined for degradation to the core autophagic machinery members, such as the ATG5-ATG12-ATG16L E3-like ligase, SQSTM1 and LC3. Involved in the formation and autophagic degradation of cytoplasmic ubiquitin-containing inclusions (p62 bodies, ALIS/aggresome-like induced structures). Important for normal brain development. Essential for the formation of axonal tracts throughout the brain and spinal cord, including the formation of the major forebrain commissures. Involved in the ability of neural cells to respond to guidance cues. Required for cortical neurons to respond to the trophic effects of netrin-1/NTN1. Regulates Wnt signaling through the removal of DVL3 aggregates, likely in an autophagy-dependent manner. This process may be important for the determination of brain size during embryonic development. May regulate osteoclastogenesis by acting on the TNFSF11/RANKL - TRAF6 pathway. After cytokinetic abscission, involved in midbody remnant degradation. In vitro strongly binds to phosphatidylinositol 3-phosphate (PtdIns3P). The protein is WD repeat and FYVE domain-containing protein 3 (Wdfy3) of Mus musculus (Mouse).